Consider the following 73-residue polypeptide: Translation initiation factor IF-1 (73 aa).

One can recognise an S1-like domain in the interval 1–73 (MPKKDGAIEI…SRGRIVYRYK (73 aa)).

This sequence belongs to the IF-1 family. As to quaternary structure, component of the 30S ribosomal translation pre-initiation complex which assembles on the 30S ribosome in the order IF-2 and IF-3, IF-1 and N-formylmethionyl-tRNA(fMet); mRNA recruitment can occur at any time during PIC assembly.

It is found in the cytoplasm. One of the essential components for the initiation of protein synthesis. Stabilizes the binding of IF-2 and IF-3 on the 30S subunit to which N-formylmethionyl-tRNA(fMet) subsequently binds. Helps modulate mRNA selection, yielding the 30S pre-initiation complex (PIC). Upon addition of the 50S ribosomal subunit IF-1, IF-2 and IF-3 are released leaving the mature 70S translation initiation complex. This chain is Translation initiation factor IF-1, found in Frankia alni (strain DSM 45986 / CECT 9034 / ACN14a).